The following is a 673-amino-acid chain: Annexin A6 (673 aa).

Ala2 bears the N-acetylalanine mark. Position 13 is a phosphoserine (Ser13). Annexin repeat units follow at residues 20–91 (FDPN…GLMR), 92–163 (PPAY…VLLQ), 175–247 (DLVQ…AVVK), 251–322 (STPE…KLSG), 363–434 (FNPD…GLMM), 435–506 (PPAH…SLAT), 521–595 (EDAQ…AIVQ), and 599–670 (NKPL…ALCG). The residue at position 30 (Tyr30) is a Phosphotyrosine. N6-acetyllysine is present on residues Lys63, Lys68, Lys75, and Lys81. The residue at position 201 (Tyr201) is a Phosphotyrosine. N6-acetyllysine occurs at positions 306, 370, and 418. At Ser422 the chain carries Phosphoserine. N6-acetyllysine is present on Lys483. Residue Ser537 is modified to Phosphoserine. Lys620 is modified (N6-acetyllysine).

The protein belongs to the annexin family. Post-translationally, phosphorylated in response to growth factor stimulation.

It localises to the cytoplasm. Its subcellular location is the melanosome. Functionally, may associate with CD21. May regulate the release of Ca(2+) from intracellular stores. In Homo sapiens (Human), this protein is Annexin A6 (ANXA6).